The sequence spans 344 residues: Dihydroorotate dehydrogenase (quinone) (344 aa).

Residues 65–69 (AGLDK) and Thr89 contribute to the FMN site. Lys69 is a substrate binding site. Substrate is bound at residue 114–118 (NRLGF). FMN is bound by residues Asn145 and Asn178. Asn178 is a substrate binding site. Ser181 serves as the catalytic Nucleophile. Position 183 (Asn183) interacts with substrate. Residues Lys223 and Thr251 each coordinate FMN. Residue 252–253 (NT) coordinates substrate. Residues Gly274, Gly303, and 324–325 (YT) contribute to the FMN site.

It belongs to the dihydroorotate dehydrogenase family. Type 2 subfamily. As to quaternary structure, monomer. The cofactor is FMN.

It is found in the cell membrane. The catalysed reaction is (S)-dihydroorotate + a quinone = orotate + a quinol. Its pathway is pyrimidine metabolism; UMP biosynthesis via de novo pathway; orotate from (S)-dihydroorotate (quinone route): step 1/1. In terms of biological role, catalyzes the conversion of dihydroorotate to orotate with quinone as electron acceptor. The sequence is that of Dihydroorotate dehydrogenase (quinone) from Methylibium petroleiphilum (strain ATCC BAA-1232 / LMG 22953 / PM1).